The following is a 425-amino-acid chain: Serine--tRNA ligase (425 aa).

233-235 (TAE) serves as a coordination point for L-serine. Residue 264–266 (RRE) coordinates ATP. Glutamate 287 is an L-serine binding site. 351–354 (EISS) provides a ligand contact to ATP. L-serine is bound at residue serine 385.

Belongs to the class-II aminoacyl-tRNA synthetase family. Type-1 seryl-tRNA synthetase subfamily. Homodimer. The tRNA molecule binds across the dimer.

The protein resides in the cytoplasm. The enzyme catalyses tRNA(Ser) + L-serine + ATP = L-seryl-tRNA(Ser) + AMP + diphosphate + H(+). It carries out the reaction tRNA(Sec) + L-serine + ATP = L-seryl-tRNA(Sec) + AMP + diphosphate + H(+). It functions in the pathway aminoacyl-tRNA biosynthesis; selenocysteinyl-tRNA(Sec) biosynthesis; L-seryl-tRNA(Sec) from L-serine and tRNA(Sec): step 1/1. Its function is as follows. Catalyzes the attachment of serine to tRNA(Ser). Is also able to aminoacylate tRNA(Sec) with serine, to form the misacylated tRNA L-seryl-tRNA(Sec), which will be further converted into selenocysteinyl-tRNA(Sec). The chain is Serine--tRNA ligase from Prochlorococcus marinus (strain SARG / CCMP1375 / SS120).